Here is a 455-residue protein sequence, read N- to C-terminus: 3-phosphoshikimate 1-carboxyvinyltransferase (455 aa).

The segment at 1-23 (MSHGSNPRPATARKSSDLKGTLR) is disordered. Positions 28, 29, and 33 each coordinate 3-phosphoshikimate. Lys-28 serves as a coordination point for phosphoenolpyruvate. Phosphoenolpyruvate-binding residues include Gly-100 and Arg-128. 3-phosphoshikimate-binding residues include Ser-173, Gln-175, Asp-326, and Lys-353. Gln-175 provides a ligand contact to phosphoenolpyruvate. The active-site Proton acceptor is Asp-326. Phosphoenolpyruvate contacts are provided by Arg-357 and Arg-405.

Belongs to the EPSP synthase family. In terms of assembly, monomer.

The protein localises to the cytoplasm. The catalysed reaction is 3-phosphoshikimate + phosphoenolpyruvate = 5-O-(1-carboxyvinyl)-3-phosphoshikimate + phosphate. It participates in metabolic intermediate biosynthesis; chorismate biosynthesis; chorismate from D-erythrose 4-phosphate and phosphoenolpyruvate: step 6/7. Its function is as follows. Catalyzes the transfer of the enolpyruvyl moiety of phosphoenolpyruvate (PEP) to the 5-hydroxyl of shikimate-3-phosphate (S3P) to produce enolpyruvyl shikimate-3-phosphate and inorganic phosphate. This chain is 3-phosphoshikimate 1-carboxyvinyltransferase, found in Rhizobium meliloti (strain 1021) (Ensifer meliloti).